The chain runs to 268 residues: Large ribosomal subunit protein uL3 (268 aa).

Gln-156 is modified (N5-methylglutamine). Low complexity predominate over residues 242-259; the sequence is VENEAAPADADNAAPEAA. The tract at residues 242-268 is disordered; that stretch reads VENEAAPADADNAAPEAAADGEEGTQA.

It belongs to the universal ribosomal protein uL3 family. In terms of assembly, part of the 50S ribosomal subunit. Forms a cluster with proteins L14 and L19. Methylated by PrmB.

One of the primary rRNA binding proteins, it binds directly near the 3'-end of the 23S rRNA, where it nucleates assembly of the 50S subunit. This is Large ribosomal subunit protein uL3 from Maricaulis maris (strain MCS10) (Caulobacter maris).